The primary structure comprises 365 residues: D-alanine--D-alanine ligase (365 aa).

Positions 135 to 345 constitute an ATP-grasp domain; sequence KLLLKSFNIP…YGSLVDKLIA (211 aa). Residue 168–223 participates in ATP binding; sequence KQSLDYPVIVKPAMLGSSIGISIAYNETQIEKCIEEAFAYDLTVVIEKFMRAREIE. Mg(2+) is bound by residues Asp-298, Glu-312, and Asn-314.

The protein belongs to the D-alanine--D-alanine ligase family. The cofactor is Mg(2+). Mn(2+) serves as cofactor.

It localises to the cytoplasm. The enzyme catalyses 2 D-alanine + ATP = D-alanyl-D-alanine + ADP + phosphate + H(+). The protein operates within cell wall biogenesis; peptidoglycan biosynthesis. Functionally, cell wall formation. The chain is D-alanine--D-alanine ligase from Borrelia turicatae (strain 91E135).